Reading from the N-terminus, the 267-residue chain is Indole-3-glycerol phosphate synthase (267 aa).

The protein belongs to the TrpC family.

It catalyses the reaction 1-(2-carboxyphenylamino)-1-deoxy-D-ribulose 5-phosphate + H(+) = (1S,2R)-1-C-(indol-3-yl)glycerol 3-phosphate + CO2 + H2O. It participates in amino-acid biosynthesis; L-tryptophan biosynthesis; L-tryptophan from chorismate: step 4/5. This is Indole-3-glycerol phosphate synthase from Polynucleobacter necessarius subsp. necessarius (strain STIR1).